The following is a 185-amino-acid chain: Small ribosomal subunit protein uS5c (185 aa).

Positions 26 to 89 (FVERLIKISR…ADGRKNLIKI (64 aa)) constitute an S5 DRBM domain.

The protein belongs to the universal ribosomal protein uS5 family. As to quaternary structure, part of the 30S ribosomal subunit. Contacts protein S4.

It is found in the plastid. The protein localises to the chloroplast. With S4 and S12 plays an important role in translational accuracy. This chain is Small ribosomal subunit protein uS5c (rps5), found in Trieres chinensis (Marine centric diatom).